A 458-amino-acid polypeptide reads, in one-letter code: Protein amnionless (458 aa).

A signal peptide spans 1–19 (MGALGRVLLWLQLCAMTRA). At 20–362 (AYKLWVPNTS…ELNQSSSGAG (343 aa)) the chain is on the extracellular side. An N-linked (GlcNAc...) asparagine glycan is attached at N27. 6 cysteine pairs are disulfide-bonded: C43/C96, C137/C213, C205/C211, C223/C249, C234/C250, and C239/C253. An interaction with CUBN region spans residues 67–87 (SDMLLPLDGELVLASGAALSA). A VWFC domain is found at 203 to 254 (QACTDASGCVCGNAEMLPWICASLLQPLGGRCPQAACQDPLLPQGQCCDLCG). An N-linked (GlcNAc...) asparagine glycan is attached at N355. The chain crosses the membrane as a helical span at residues 363 to 383 (LAGGVAALVLLALLGTVLLLL). Over 384-458 (HRSGRLRWRR…LFAGEAEAEA (75 aa)) the chain is Cytoplasmic.

As to quaternary structure, interacts (via extracellular region) with CUBN/cubilin. This gives rise to a huge complex containing one AMN chain and three CUBN chains. In terms of processing, N-glycosylated. A soluble form arises by proteolytic removal of the membrane anchor. In terms of tissue distribution, expressed in polarized epithelial cells which are specialized in resorption or transport, specifically kidney proximal tubules and intestinal epithelium.

It is found in the apical cell membrane. The protein localises to the cell membrane. Its subcellular location is the endosome membrane. It localises to the membrane. The protein resides in the coated pit. Membrane-bound component of the endocytic receptor formed by AMN and CUBN. Required for normal CUBN glycosylation and trafficking to the cell surface. The complex formed by AMN and CUBN is required for efficient absorption of vitamin B12. Required for normal CUBN-mediated protein transport in the kidney. The protein is Protein amnionless (Amn) of Mus musculus (Mouse).